Reading from the N-terminus, the 878-residue chain is Phosphoenolpyruvate carboxylase (878 aa).

Active-site residues include His-137 and Lys-545.

This sequence belongs to the PEPCase type 1 family. It depends on Mg(2+) as a cofactor.

It carries out the reaction oxaloacetate + phosphate = phosphoenolpyruvate + hydrogencarbonate. Functionally, forms oxaloacetate, a four-carbon dicarboxylic acid source for the tricarboxylic acid cycle. The chain is Phosphoenolpyruvate carboxylase from Photorhabdus laumondii subsp. laumondii (strain DSM 15139 / CIP 105565 / TT01) (Photorhabdus luminescens subsp. laumondii).